Consider the following 422-residue polypeptide: BTB/POZ domain-containing protein KCTD18 (422 aa).

Residues 12 to 80 (DILRLNVGGC…YLHGEVHIPT (69 aa)) form the BTB domain. Disordered regions lie at residues 289–357 (VKNS…THLP) and 376–422 (LRRT…DQTK). The segment covering 396 to 406 (PAGPPEPPPDA) has biased composition (pro residues). The segment covering 413–422 (WTENGQDQTK) has biased composition (polar residues).

In Bos taurus (Bovine), this protein is BTB/POZ domain-containing protein KCTD18 (KCTD18).